A 946-amino-acid polypeptide reads, in one-letter code: Atos homolog protein A (946 aa).

The tract at residues 24–32 is transactivation domain 1 (TAD1); sequence ALLITEGRT. The span at 34-43 shows a compositional bias: basic and acidic residues; sequence EHSVKGRTEG. 4 disordered regions span residues 34–58, 246–271, 484–524, and 547–567; these read EHSVKGRTEGPHCPPAQLSQPAPNK, SVTQPHNSQDNDQNSAPVSQHAFTKP, FQSS…TGNQ, and SCTDSFHKPQKDNPKICSQKV. 2 stretches are compositionally biased toward polar residues: residues 247 to 267 and 484 to 500; these read VTQPHNSQDNDQNSAPVSQHA and FQSSGQSTVPSSNNENI. Basic and acidic residues-rich tracts occupy residues 503–517 and 547–560; these read LPEKRDIKQSEHGEI and SCTDSFHKPQKDNP. The tract at residues 749–806 is required for macropage invasion; that stretch reads LLGNFEESVLNYRFEPLGVVEGFTAEVGASGIFCPTHMTLPVKVSFYSVSDDNAPSPY. The segment at 833-841 is transactivation domain 2 (TAD2); sequence FNPNKTVVK.

The protein belongs to the ATOS family.

Its subcellular location is the nucleus. In terms of biological role, transcription regulator that syncronizes transcriptional and translational programs to promote macrophage invasion of tissues. The protein is Atos homolog protein A (atosa) of Xenopus tropicalis (Western clawed frog).